Consider the following 396-residue polypeptide: Cellular tumor antigen p53 (396 aa).

Residues 1-44 (MADLAENVSLPLSQESFEDLWKMNLNLVAVQPPETESWVGYDNF) are transcription activation (acidic). The tract at residues 63–89 (ATEPAPQPSISTLDTGSPPTSTVPTTS) is disordered. The span at 77–89 (TGSPPTSTVPTTS) shows a compositional bias: low complexity. Residues 90–281 (DYPGALGFQL…KTEEINLKKQ (192 aa)) mediate DNA binding. Zn(2+) is bound by residues cysteine 164, histidine 167, cysteine 227, and cysteine 231. The segment at 262–269 (RVCACPGR) is interaction with DNA. The short motif at 297–317 (KRAMKEASLPAPQPGASKKTK) is the Bipartite nuclear localization signal element. The tract at residues 301 to 322 (KEASLPAPQPGASKKTKSSPAV) is disordered. Positions 325 to 356 (DEIYTLQIRGKEKYEMLKKFNDSLELSELVPV) are oligomerization. The short motif at 339–350 (EMLKKFNDSLEL) is the Nuclear export signal element. The segment at 369–392 (KRVAKRDFGVGPKKRKKLLVKEEK) is basic (repression of DNA-binding).

It belongs to the p53 family. Binds DNA as a homotetramer. Requires Zn(2+) as cofactor.

The protein resides in the cytoplasm. The protein localises to the nucleus. Functionally, multifunctional transcription factor that induces cell cycle arrest, DNA repair or apoptosis upon binding to its target DNA sequence. Acts as a tumor suppressor in many tumor types; induces growth arrest or apoptosis depending on the physiological circumstances and cell type. Negatively regulates cell division by controlling expression of a set of genes required for this process. One of the activated genes is an inhibitor of cyclin-dependent kinases. Apoptosis induction seems to be mediated either by stimulation of BAX and FAS antigen expression, or by repression of Bcl-2 expression. This Oncorhynchus mykiss (Rainbow trout) protein is Cellular tumor antigen p53 (tp53).